The chain runs to 177 residues: ATP synthase subunit b, chloroplastic (177 aa).

Residues 26 to 44 form a helical membrane-spanning segment; the sequence is IINLSIVLFVVIRFLGEAL.

The protein belongs to the ATPase B chain family. In terms of assembly, F-type ATPases have 2 components, F(1) - the catalytic core - and F(0) - the membrane proton channel. F(1) has five subunits: alpha(3), beta(3), gamma(1), delta(1), epsilon(1). F(0) has four main subunits: a(1), b(1), b'(1) and c(10-14). The alpha and beta chains form an alternating ring which encloses part of the gamma chain. F(1) is attached to F(0) by a central stalk formed by the gamma and epsilon chains, while a peripheral stalk is formed by the delta, b and b' chains.

The protein resides in the plastid. The protein localises to the chloroplast thylakoid membrane. Its function is as follows. F(1)F(0) ATP synthase produces ATP from ADP in the presence of a proton or sodium gradient. F-type ATPases consist of two structural domains, F(1) containing the extramembraneous catalytic core and F(0) containing the membrane proton channel, linked together by a central stalk and a peripheral stalk. During catalysis, ATP synthesis in the catalytic domain of F(1) is coupled via a rotary mechanism of the central stalk subunits to proton translocation. Functionally, component of the F(0) channel, it forms part of the peripheral stalk, linking F(1) to F(0). The sequence is that of ATP synthase subunit b, chloroplastic from Bigelowiella natans (Pedinomonas minutissima).